The following is a 392-amino-acid chain: Integrin-linked kinase-associated serine/threonine phosphatase 2C (392 aa).

An N-acetylmethionine modification is found at methionine 1. The interval 1–90 (MDLFGDLPEP…TSEEEKNGSE (90 aa)) is disordered. Serine 13 is subject to Phosphoserine. The span at 56 to 70 (SGDSGSLATSISQMV) shows a compositional bias: polar residues. Positions 72–90 (TEGKGAKRKTSEEEKNGSE) are enriched in basic and acidic residues. The PPM-type phosphatase domain maps to 108 to 390 (KGYVAERKGE…DNVTVMVVRI (283 aa)). Mn(2+) is bound by residues aspartate 152 and glycine 153. An N6-acetyllysine modification is found at lysine 210. Positions 326 and 381 each coordinate Mn(2+).

It belongs to the PP2C family. In terms of assembly, interacts with ILK. Specific association with ILK is independent of the catalytic activity of either partner. Mg(2+) serves as cofactor. It depends on Mn(2+) as a cofactor. Widely expressed. Highest levels expressed in striated muscle. Much lower levels evident in various smooth muscle tissues.

The protein resides in the cytoplasm. The enzyme catalyses O-phospho-L-seryl-[protein] + H2O = L-seryl-[protein] + phosphate. It catalyses the reaction O-phospho-L-threonyl-[protein] + H2O = L-threonyl-[protein] + phosphate. With respect to regulation, inhibited rather than stimulated by magnesium. Functionally, protein phosphatase that may play a role in regulation of cell cycle progression via dephosphorylation of its substrates whose appropriate phosphorylation states might be crucial for cell proliferation. Selectively associates with integrin linked kinase (ILK), to modulate cell adhesion and growth factor signaling. Inhibits the ILK-GSK3B signaling axis and may play an important role in inhibiting oncogenic transformation. The chain is Integrin-linked kinase-associated serine/threonine phosphatase 2C (ILKAP) from Homo sapiens (Human).